A 359-amino-acid polypeptide reads, in one-letter code: 3-dehydroquinate synthase (359 aa).

Residues D71–K76, G105–D109, T129–T130, K142, and K151 contribute to the NAD(+) site. Zn(2+) contacts are provided by E184, H247, and H264.

The protein belongs to the sugar phosphate cyclases superfamily. Dehydroquinate synthase family. Co(2+) serves as cofactor. Zn(2+) is required as a cofactor. The cofactor is NAD(+).

The protein localises to the cytoplasm. The catalysed reaction is 7-phospho-2-dehydro-3-deoxy-D-arabino-heptonate = 3-dehydroquinate + phosphate. Its pathway is metabolic intermediate biosynthesis; chorismate biosynthesis; chorismate from D-erythrose 4-phosphate and phosphoenolpyruvate: step 2/7. In terms of biological role, catalyzes the conversion of 3-deoxy-D-arabino-heptulosonate 7-phosphate (DAHP) to dehydroquinate (DHQ). The sequence is that of 3-dehydroquinate synthase from Burkholderia cenocepacia (strain ATCC BAA-245 / DSM 16553 / LMG 16656 / NCTC 13227 / J2315 / CF5610) (Burkholderia cepacia (strain J2315)).